The following is a 704-amino-acid chain: Elongation factor G (704 aa).

Residues 8-291 form the tr-type G domain; the sequence is DKVRNIGIMA…AVVDYLASPL (284 aa). GTP contacts are provided by residues 17–24, 90–94, and 144–147; these read AHIDAGKT, DTPGH, and NKMD.

Belongs to the TRAFAC class translation factor GTPase superfamily. Classic translation factor GTPase family. EF-G/EF-2 subfamily.

The protein resides in the cytoplasm. Functionally, catalyzes the GTP-dependent ribosomal translocation step during translation elongation. During this step, the ribosome changes from the pre-translocational (PRE) to the post-translocational (POST) state as the newly formed A-site-bound peptidyl-tRNA and P-site-bound deacylated tRNA move to the P and E sites, respectively. Catalyzes the coordinated movement of the two tRNA molecules, the mRNA and conformational changes in the ribosome. The sequence is that of Elongation factor G from Chlorobium phaeovibrioides (strain DSM 265 / 1930) (Prosthecochloris vibrioformis (strain DSM 265)).